The following is a 260-amino-acid chain: MTKVLVEPDPEEVKQLSEALGRQPVILAGICEAEYRGRAESVAGPALRIAMCKPDGTFILHNAMEKREPTNWNPAPSRQSIEVRDGCVVLRSRRLDVPEEVVVYFHKVLLACSLPKEGAKSEDSVFSLFRSEEDMKRVIREDPSVIEPGFRPVGEEVECGAGVADVVGYDEEGRFVVLELKRTRAGVSAASQLRRYVEAFREERGEEVRGILVAPSVTDRCRRLLEKYGLEWKKLEPVPLRDDGGKKQCTLTEFLAGEGD.

It belongs to the NucS endonuclease family.

Its subcellular location is the cytoplasm. In terms of biological role, cleaves both 3' and 5' ssDNA extremities of branched DNA structures. This Methanopyrus kandleri (strain AV19 / DSM 6324 / JCM 9639 / NBRC 100938) protein is Endonuclease NucS.